A 441-amino-acid chain; its full sequence is C-terminal-binding protein 1 (441 aa).

The interval 1–70 (MGSSHLLNKG…EIHEKVLNEA (70 aa)) is interaction with GLIS2 1. NAD(+) is bound by residues Ser100, 180-185 (IGLGRV), Asp204, 237-243 (CGLNEHN), 264-266 (TAR), and Asp290. Arg266 is an active-site residue. Residues 288–360 (ALDVHESEPF…VNKDHLTAAT (73 aa)) are interaction with GLIS2 2. Glu295 is a catalytic residue. Residue Ser300 is modified to Phosphoserine. The active-site Proton donor is His315. Position 315–318 (315–318 (HAAW)) interacts with NAD(+). The segment at 409–441 (SHGLPPVAHPPHAPSPGQTVKPEADRDHTSDQL) is disordered. A Phosphoserine modification is found at Ser423. Residue Lys429 forms a Glycyl lysine isopeptide (Lys-Gly) (interchain with G-Cter in SUMO) linkage. Over residues 430-441 (PEADRDHTSDQL) the composition is skewed to basic and acidic residues.

Belongs to the D-isomer specific 2-hydroxyacid dehydrogenase family. Homo- or heterodimer. Heterodimer with CTBP2. Interacts with ELK3 (via its PXDLS motif). Interacts with RBBP8 (via its PXDLS motif). Interacts with PNN, MECOM and ZFHX1B. Interacts with ZNF366 (via PXDLS motif). Interaction with SATB1 (non-acetylated form); the interaction stabilizes its attachment to DNA and promotes transcription repression. Interacts with PRDM16; the interaction represses white adipose tissue (WAT)-specific genes expression. Interacts with GLIS2, HIPK2, FOXP1, FOXP2, HDAC4, HDAC5, HDAC9, NRIP1, WIZ and ZNF217. Interacts with BCL6; the interaction is required for BCL6 transcriptional autoinhibition and inhibition of some BCL6 target genes. Interacts with IKZF4. Interacts with MCRIP1 (unphosphorylated form, via the PXDLS motif); competitively inhibiting CTBP-ZEB1 interaction. Interacts with Bassoon/BSN; this interaction targets and anchors CTBP1 to presynapses. Interacts with SIMC1. It depends on NAD(+) as a cofactor. In terms of processing, ADP-ribosylated; when cells are exposed to brefeldin A. Post-translationally, the level of phosphorylation appears to be regulated during the cell cycle. Phosphorylation by HIPK2 on Ser-423 induces proteasomal degradation. Sumoylation on Lys-429 is promoted by the E3 SUMO-protein ligase CBX4. Expressed in a wide range of adult tissues.

It is found in the cytoplasm. It localises to the nucleus. Its function is as follows. Corepressor targeting diverse transcription regulators such as GLIS2 or BCL6. Has dehydrogenase activity. Involved in controlling the equilibrium between tubular and stacked structures in the Golgi complex. Functions in brown adipose tissue (BAT) differentiation. The protein is C-terminal-binding protein 1 (Ctbp1) of Mus musculus (Mouse).